Here is a 493-residue protein sequence, read N- to C-terminus: Ribulose bisphosphate carboxylase large chain (493 aa).

Residues Asn132 and Thr182 each coordinate substrate. Lys184 serves as the catalytic Proton acceptor. Lys186 provides a ligand contact to substrate. Positions 210, 212, and 213 each coordinate Mg(2+). At Lys210 the chain carries N6-carboxylysine. His302 (proton acceptor) is an active-site residue. Substrate contacts are provided by Arg303, His335, and Ser387.

The protein belongs to the RuBisCO large chain family. Type I subfamily. In terms of assembly, heterohexadecamer of 8 large chains and 8 small chains. Mg(2+) serves as cofactor.

It catalyses the reaction 2 (2R)-3-phosphoglycerate + 2 H(+) = D-ribulose 1,5-bisphosphate + CO2 + H2O. The catalysed reaction is D-ribulose 1,5-bisphosphate + O2 = 2-phosphoglycolate + (2R)-3-phosphoglycerate + 2 H(+). Functionally, ruBisCO catalyzes two reactions: the carboxylation of D-ribulose 1,5-bisphosphate, the primary event in carbon dioxide fixation, as well as the oxidative fragmentation of the pentose substrate. Both reactions occur simultaneously and in competition at the same active site. The protein is Ribulose bisphosphate carboxylase large chain of Acidiphilium cryptum (strain JF-5).